The primary structure comprises 318 residues: Nitrate reductase [NADH] (318 aa).

The region spanning 216–291 (AKSFTMAEVE…LLEYYIGELA (76 aa)) is the Cytochrome b5 heme-binding domain. Heme contacts are provided by histidine 251 and histidine 274.

It belongs to the nitrate reductase family. In terms of assembly, homodimer. FAD is required as a cofactor. Requires heme as cofactor. Mo-molybdopterin serves as cofactor.

It catalyses the reaction nitrite + NAD(+) + H2O = nitrate + NADH + H(+). Functionally, nitrate reductase is a key enzyme involved in the first step of nitrate assimilation in plants, fungi and bacteria. In Chlorella vulgaris (Green alga), this protein is Nitrate reductase [NADH].